We begin with the raw amino-acid sequence, 399 residues long: DJ-1 protein homolog F (399 aa).

PfpI endopeptidase domains follow at residues 7–199 (KSVL…ESLG) and 211–394 (TSLL…TALG).

It belongs to the peptidase C56 family. In terms of assembly, homotrimer.

Functionally, may be involved in oxidative stress response. In Arabidopsis thaliana (Mouse-ear cress), this protein is DJ-1 protein homolog F (DJ1F).